A 274-amino-acid chain; its full sequence is Insulin-like growth factor-binding protein-like 1 (274 aa).

Positions 1–21 are cleaved as a signal peptide; the sequence is MPRSPGLFLLLLVLQPLPALG. Positions 30–105 constitute an IGFBP N-terminal domain; it reads RNPECGPCRP…PEGTGLCVCA (76 aa). 7 disulfide bridges follow: cysteine 34–cysteine 59, cysteine 37–cysteine 61, cysteine 42–cysteine 62, cysteine 48–cysteine 65, cysteine 73–cysteine 87, cysteine 81–cysteine 102, and cysteine 111–cysteine 147. The 59-residue stretch at 91-149 folds into the Kazal-like domain; the sequence is AAGAAPEGTGLCVCAQRGSVCGSDGRSYPSVCALRLRARQAPRALPGHLHKARDGPCEF. An Ig-like C2-type domain is found at 151 to 255; it reads PVVITPPQSV…GEAQSHGTVT (105 aa). Asparagine 162 is a glycosylation site (N-linked (GlcNAc...) asparagine). Cysteine 172 and cysteine 239 are joined by a disulfide.

It is found in the secreted. Functionally, IGF-binding proteins prolong the half-life of IGFs and have been shown to either inhibit or stimulate the growth promoting effects of the IGFs in cell culture. They alter the interaction of IGFs with their cell surface receptors. The chain is Insulin-like growth factor-binding protein-like 1 (IGFBPL1) from Bos taurus (Bovine).